Reading from the N-terminus, the 653-residue chain is Sodium-dependent nutrient amino acid transporter 1 (653 aa).

Residues 1–55 form a disordered region; the sequence is MELKGVHQQNGTSNGTGAAGTEGESPPPAPAPATAEAAASLETTTEKVDAEQQKT. At 1–59 the chain is on the cytoplasmic side; sequence MELKGVHQQNGTSNGTGAAGTEGESPPPAPAPATAEAAASLETTTEKVDAEQQKTERTN. Low complexity-rich tracts occupy residues 10–24 and 32–43; these read NGTSNGTGAAGTEGE and PATAEAAASLET. A compositionally biased stretch (basic and acidic residues) spans 44–55; it reads TTEKVDAEQQKT. The next 4 helical transmembrane spans lie at 60–80, 93–113, 125–145, and 146–166; these read WGNGLEFLMSCISVSVGLGNV, GAFLIPYIIVLFLIGKPMYYL, TVKIWSVVPGFVGVGYGQAFA, and TICIITYYSSLLALTLFYLFV. 2 N-linked (GlcNAc...) asparagine glycosylation sites follow: N202 and N205. Helical transmembrane passes span 241–261, 270–290, 319–339, 353–373, 413–433, 459–479, 486–506, 528–548, and 565–585; these read PDWKLTLALFVSWVVIFLVIM, AAYFLALFPYVVLFILLVRAV, AVVQCFFSLAVGSGPIIMFAS, IVTTLDTLTSLLGGITIFAIL, LFSVLFFFMLFVLGIGSIVAL, ICGFLMGLVYVTPGGQWILTL, TYVVFILAIFELAGIVWIYGM, CWSFFTPVMMIVIFIYSMVTI, and AGWLLFGIGAAQFPLWWMWYI.

Belongs to the sodium:neurotransmitter symporter (SNF) (TC 2.A.22) family.

Its subcellular location is the membrane. Its function is as follows. Unusual broad substrate spectrum amino acid:sodium cotransporter that promotes absorption of the D isomers of essential amino acids. Neutral amino acids are the preferred substrates, especially methionine and phenylalanine. This chain is Sodium-dependent nutrient amino acid transporter 1, found in Drosophila pseudoobscura pseudoobscura (Fruit fly).